The chain runs to 1141 residues: MINRDNKKAITKKGMISNRLNKFSIRKYTVGTASILVGTTLIFGLGNQEAKAAENTSTENAKQDDATTSDNKEVVSETENNSTTENDSTNPIKKETNTDSQPEAKEESTTSSTQQQQNNVTATTETKPQNIEKENVKPSTDKTATEDTSVILEEKKAPNYTNNDVTTKPSTSEIQTKPTTPQESTNIENSQPQPTPSKVDNQVTDATNPKEPVNVSKEELKNNPEKLKELVRNDNNTDRSTKPVATAPTSVAPKRLNAKMRFAVAQPAAVASNNVNDLITVTKQTIKVGDGKDNVAAAHDGKDIEYDTEFTIDNKVKKGDTMTINYDKNVIPSDLTDKNDPIDITDPSGEVIAKGTFDKATKQITYTFTDYVDKYEDIKARLTLYSYIDKQAVPNETSLNLTFATAGKETSQNVSVDYQDPMVHGDSNIQSIFTKLDENKQTIEQQIYVNPLKKTATNTKVDIAGSQVDDYGNIKLGNGSTIIDQNTEIKVYKVNPNQQLPQSNRIYDFSQYEDVTSQFDNKKSFSNNVATLDFGDINSAYIIKVVSKYTPTSDGELDIAQGTSMRTTDKYGYYNYAGYSNFIVTSNDTGGGDGTVKPEEKLYKIGDYVWEDVDKDGVQGTDSKEKPMANVLVTLTYPDGTTKSVRTDANGHYEFGGLKDGETYTVKFETPAGYLPTKVNGTTDGEKDSNGSSITVKINGKDDMSLDTGFYKEPKYNLGDYVWEDTNKDGIQDANEPGIKDVKVTLKDSTGKVIGTTTTDASGKYKFTDLDNGNYTVEFETPAGYTPTVKNTTAEDKDSNGLTTTGVIKDADNMTLDSGFYKTPKYSLGDYVWYDSNKDGKQDSTEKGIKDVKVTLLNEKGEVIGTTKTDENGKYRFDNLDSGKYKVIFEKPAGLTQTVTNTTEDDKDADGGEVDVTITDHDDFTLDNGYFEEDTSDSDSDSDSDSDSDSDSDSDSDSDSDSDSDSDSDSDSDSDSDSDSDSDSDSDSDSDSDSDSDSDSDSDSDSDSDSDSDSDSDSDSDSDSDSDSDSDSDSDSDSDSDSDSDSDSDSDSDSDSDSDSDSDSDSDSDSDSDSDSDSDSDAGKHTPVKPMSTTKDHHNKAKALPETGSENNGSNNATLFGGLFAALGSLLLFGRRKKQNK.

Positions 1-52 are cleaved as a signal peptide; sequence MINRDNKKAITKKGMISNRLNKFSIRKYTVGTASILVGTTLIFGLGNQEAKA. The YSIRK-G/S signaling motif signature appears at 23–34; sequence FSIRKYTVGTAS. Positions 53-601 are ligand binding A region; that stretch reads AENTSTENAK…GDGTVKPEEK (549 aa). Residues 54-248 are disordered; it reads ENTSTENAKQ…RSTKPVATAP (195 aa). The segment covering 61–75 has biased composition (basic and acidic residues); sequence AKQDDATTSDNKEVV. The span at 77 to 90 shows a compositional bias: low complexity; the sequence is ETENNSTTENDSTN. A compositionally biased stretch (basic and acidic residues) spans 92–108; it reads IKKETNTDSQPEAKEES. A compositionally biased stretch (low complexity) spans 109–126; it reads TTSSTQQQQNNVTATTET. Positions 130–145 are enriched in basic and acidic residues; the sequence is NIEKENVKPSTDKTAT. Residues 159-207 are compositionally biased toward polar residues; sequence NYTNNDVTTKPSTSEIQTKPTTPQESTNIENSQPQPTPSKVDNQVTDAT. Residues 216–241 are compositionally biased toward basic and acidic residues; that stretch reads SKEELKNNPEKLKELVRNDNNTDRST. CNA-B domains lie at 602-714, 715-824, and 825-935; these read LYKI…YKEP, KYNL…YKTP, and KYSL…EEDT. A disordered region spans residues 899–1117; the sequence is VTNTTEDDKD…GSENNGSNNA (219 aa). 2 stretches are compositionally biased toward acidic residues: residues 903 to 913 and 930 to 1080; these read TEDDKDADGGE and YFEE…DSDS. Positions 1104-1108 match the LPXTG sorting signal motif; that stretch reads LPETG. The residue at position 1107 (Thr1107) is a Pentaglycyl murein peptidoglycan amidated threonine. Residues 1108 to 1141 constitute a propeptide, removed by sortase; the sequence is GSENNGSNNATLFGGLFAALGSLLLFGRRKKQNK.

It belongs to the serine-aspartate repeat-containing protein (SDr) family. In terms of assembly, interacts with host complement factor H/CFAH (via C-terminus). Interacts with host complement regulator C4BPA.

It localises to the secreted. The protein resides in the cell wall. Its function is as follows. Cell surface-associated calcium-binding protein which plays an important role in adhesion and pathogenesis. Contributes to the resistance to killing by innate immune components in blood and thus attenuates bacterial clearance by interacting with host complement factor H/CFAH and modulating its activity. Also inhibits bacterial opsonization and killing by interacting with host complement regulator C4BPA and thus inhibiting classical complement pathway activation. This is Serine-aspartate repeat-containing protein E (sdrE) from Staphylococcus aureus (strain N315).